The chain runs to 347 residues: D-alanine--D-alanine ligase (347 aa).

Positions 131 to 333 (KRVLESAGIA…YPELIERLVD (203 aa)) constitute an ATP-grasp domain. 161 to 216 (EEKLAYPVFTKPSNMGSSVGISKSENQEELRQALKLAFRYDSRVLVEQGVNAREIE) contributes to the ATP binding site. Mg(2+) is bound by residues D287, E300, and N302.

The protein belongs to the D-alanine--D-alanine ligase family. Mg(2+) is required as a cofactor. Requires Mn(2+) as cofactor.

It localises to the cytoplasm. The enzyme catalyses 2 D-alanine + ATP = D-alanyl-D-alanine + ADP + phosphate + H(+). It participates in cell wall biogenesis; peptidoglycan biosynthesis. Functionally, cell wall formation. This Streptococcus pneumoniae (strain JJA) protein is D-alanine--D-alanine ligase.